The sequence spans 69 residues: Large ribosomal subunit protein uL29 (69 aa).

The protein belongs to the universal ribosomal protein uL29 family.

In Polaromonas sp. (strain JS666 / ATCC BAA-500), this protein is Large ribosomal subunit protein uL29.